The following is a 169-amino-acid chain: Pyrophosphate-energized proton pump 1 (169 aa).

3 helical membrane-spanning segments follow: residues 45–65, 114–134, and 141–161; these read YVVA…GIAM, VIPS…VLLI, and AFAA…LVAI.

Belongs to the H(+)-translocating pyrophosphatase (TC 3.A.10) family. As to quaternary structure, homodimer. It depends on Mg(2+) as a cofactor.

It is found in the cell inner membrane. The enzyme catalyses diphosphate + H2O + H(+)(in) = 2 phosphate + 2 H(+)(out). In terms of biological role, proton pump that utilizes the energy of pyrophosphate hydrolysis as the driving force for proton movement across the membrane. Generates a proton motive force. This chain is Pyrophosphate-energized proton pump 1 (hppA1), found in Rhizobium leguminosarum bv. trifolii.